Reading from the N-terminus, the 158-residue chain is Transcription elongation factor GreA (158 aa).

Residues 4–75 adopt a coiled-coil conformation; sequence EKTYPMTQEG…TQLENMIRNA (72 aa).

This sequence belongs to the GreA/GreB family.

In terms of biological role, necessary for efficient RNA polymerase transcription elongation past template-encoded arresting sites. The arresting sites in DNA have the property of trapping a certain fraction of elongating RNA polymerases that pass through, resulting in locked ternary complexes. Cleavage of the nascent transcript by cleavage factors such as GreA or GreB allows the resumption of elongation from the new 3'terminus. GreA releases sequences of 2 to 3 nucleotides. This chain is Transcription elongation factor GreA, found in Bacillus cereus (strain ATCC 10987 / NRS 248).